Consider the following 421-residue polypeptide: Serine--tRNA ligase (421 aa).

229–231 is an L-serine binding site; that stretch reads TAE. 260–262 lines the ATP pocket; the sequence is RAE. Glutamate 283 serves as a coordination point for L-serine. 347–350 lines the ATP pocket; that stretch reads EISS. Serine 383 contacts L-serine.

It belongs to the class-II aminoacyl-tRNA synthetase family. Type-1 seryl-tRNA synthetase subfamily. In terms of assembly, homodimer. The tRNA molecule binds across the dimer.

It is found in the cytoplasm. The enzyme catalyses tRNA(Ser) + L-serine + ATP = L-seryl-tRNA(Ser) + AMP + diphosphate + H(+). It catalyses the reaction tRNA(Sec) + L-serine + ATP = L-seryl-tRNA(Sec) + AMP + diphosphate + H(+). It participates in aminoacyl-tRNA biosynthesis; selenocysteinyl-tRNA(Sec) biosynthesis; L-seryl-tRNA(Sec) from L-serine and tRNA(Sec): step 1/1. In terms of biological role, catalyzes the attachment of serine to tRNA(Ser). Is also able to aminoacylate tRNA(Sec) with serine, to form the misacylated tRNA L-seryl-tRNA(Sec), which will be further converted into selenocysteinyl-tRNA(Sec). The chain is Serine--tRNA ligase from Desulfitobacterium hafniense (strain Y51).